A 383-amino-acid chain; its full sequence is Deoxyguanosinetriphosphate triphosphohydrolase-like protein (383 aa).

Residues 62–198 form the HD domain; sequence RLTHSLEVST…AALADDISYI (137 aa).

It belongs to the dGTPase family. Type 2 subfamily.

The chain is Deoxyguanosinetriphosphate triphosphohydrolase-like protein from Rickettsia bellii (strain RML369-C).